The chain runs to 262 residues: MQVDLLSSAQSAHALHLFHQHSPLVHCMTNDVVQTFTANTLLALGASPAMVIETEEASQFAAIASALLINVGTLTQPRAQAMRAAVEQAKRSQTPWTLDPVAVGALDYRRCFCLELLSHKPTAIRGNASEIMALAGIANGGRGVDTTDAAANAIPAAQTLARETGAIVVVTGEVDYVTDGHRIIGIHGGDPLMTKVVGTGCALSAVVAACCALPGDMLENVASACHWMKQAGERAVARSEGPGSFVPHFLDALWQLTPEVQA.

Met-50 is a substrate binding site. The ATP site is built by Arg-125 and Thr-171. Residue Gly-198 coordinates substrate.

This sequence belongs to the Thz kinase family. Mg(2+) serves as cofactor.

It carries out the reaction 5-(2-hydroxyethyl)-4-methylthiazole + ATP = 4-methyl-5-(2-phosphooxyethyl)-thiazole + ADP + H(+). It functions in the pathway cofactor biosynthesis; thiamine diphosphate biosynthesis; 4-methyl-5-(2-phosphoethyl)-thiazole from 5-(2-hydroxyethyl)-4-methylthiazole: step 1/1. Functionally, catalyzes the phosphorylation of the hydroxyl group of 4-methyl-5-beta-hydroxyethylthiazole (THZ). The polypeptide is Hydroxyethylthiazole kinase (Escherichia coli O17:K52:H18 (strain UMN026 / ExPEC)).